We begin with the raw amino-acid sequence, 341 residues long: Anthranilate phosphoribosyltransferase (341 aa).

5-phospho-alpha-D-ribose 1-diphosphate-binding positions include Gly83, Ser91, 93-96 (NTST), 111-115 (KHGNR), and Ser123. Gly83 provides a ligand contact to anthranilate. Ser95 provides a ligand contact to Mg(2+). Asn114 contacts anthranilate. Residue Arg169 participates in anthranilate binding. Residues Asp228 and Glu229 each contribute to the Mg(2+) site.

This sequence belongs to the anthranilate phosphoribosyltransferase family. As to quaternary structure, homodimer. The cofactor is Mg(2+).

The catalysed reaction is N-(5-phospho-beta-D-ribosyl)anthranilate + diphosphate = 5-phospho-alpha-D-ribose 1-diphosphate + anthranilate. It participates in amino-acid biosynthesis; L-tryptophan biosynthesis; L-tryptophan from chorismate: step 2/5. In terms of biological role, catalyzes the transfer of the phosphoribosyl group of 5-phosphorylribose-1-pyrophosphate (PRPP) to anthranilate to yield N-(5'-phosphoribosyl)-anthranilate (PRA). The protein is Anthranilate phosphoribosyltransferase of Hyphomonas neptunium (strain ATCC 15444).